Consider the following 98-residue polypeptide: Co-chaperonin GroES (98 aa).

It belongs to the GroES chaperonin family. Heptamer of 7 subunits arranged in a ring. Interacts with the chaperonin GroEL.

It localises to the cytoplasm. Its function is as follows. Together with the chaperonin GroEL, plays an essential role in assisting protein folding. The GroEL-GroES system forms a nano-cage that allows encapsulation of the non-native substrate proteins and provides a physical environment optimized to promote and accelerate protein folding. GroES binds to the apical surface of the GroEL ring, thereby capping the opening of the GroEL channel. The sequence is that of Co-chaperonin GroES from Clavibacter michiganensis subsp. michiganensis (strain NCPPB 382).